The sequence spans 210 residues: Phosphoribosyl-dephospho-CoA transferase (210 aa).

Active-site residues include Asp-135 and Asp-137.

It belongs to the MdcG family.

The catalysed reaction is apo-[malonate decarboxylase ACP] + 2'-(5''-triphospho-alpha-D-ribosyl)-3'-dephospho-CoA = holo-[malonate decarboxylase ACP] + diphosphate. Functionally, transfers 2'-(5-triphosphoribosyl)-3'-dephosphocoenzyme-A to the apo-[acyl-carrier-protein] of the malonate decarboxylase to yield holo-[acyl-carrier-protein]. The polypeptide is Phosphoribosyl-dephospho-CoA transferase (Pseudomonas aeruginosa (strain ATCC 15692 / DSM 22644 / CIP 104116 / JCM 14847 / LMG 12228 / 1C / PRS 101 / PAO1)).